The following is a 513-amino-acid chain: Activin receptor type-2A (513 aa).

The signal sequence occupies residues 1-19 (MGAATKLAFAVFLISCSSG). Residues 20–139 (AILGRSETQE…VTPKPPLFNT (120 aa)) lie on the Extracellular side of the membrane. 5 disulfide bridges follow: cysteine 30/cysteine 60, cysteine 50/cysteine 78, cysteine 85/cysteine 104, cysteine 91/cysteine 103, and cysteine 105/cysteine 110. N-linked (GlcNAc...) asparagine glycosylation is found at asparagine 43 and asparagine 66. Residues 140 to 160 (LLYSLVPIMGIAVIVLFSFWM) form a helical membrane-spanning segment. The Cytoplasmic segment spans residues 161–513 (YRHHKLAYPP…VDFPPKESSL (353 aa)). In terms of domain architecture, Protein kinase spans 192-485 (LQLLEIKARG…EERIIQMQKL (294 aa)). Residues 198–206 (KARGRFGCV) and lysine 219 each bind ATP. The active-site Proton acceptor is aspartate 322.

Belongs to the protein kinase superfamily. TKL Ser/Thr protein kinase family. TGFB receptor subfamily. Requires Mg(2+) as cofactor. The cofactor is Mn(2+). As to expression, expressed in hen anterior pituitary during the ovulatory cycle and in the ovarian follicle.

The protein resides in the cell membrane. The enzyme catalyses L-threonyl-[receptor-protein] + ATP = O-phospho-L-threonyl-[receptor-protein] + ADP + H(+). The catalysed reaction is L-seryl-[receptor-protein] + ATP = O-phospho-L-seryl-[receptor-protein] + ADP + H(+). On ligand binding, forms a receptor complex consisting of two type II and two type I transmembrane serine/threonine kinases. Type II receptors phosphorylate and activate type I receptors which autophosphorylate, then bind and activate SMAD transcriptional regulators. Receptor for activin A, activin B and inhibin A. May modulate neuropeptide expression in dorsal root ganglia (DRG) neurons and ovarian follicle development. The sequence is that of Activin receptor type-2A (ACVR2A) from Gallus gallus (Chicken).